Reading from the N-terminus, the 644-residue chain is SPbeta prophage-derived uncharacterized protein YomE (644 aa).

The sequence is that of SPbeta prophage-derived uncharacterized protein YomE (yomE) from Bacillus subtilis (strain 168).